Reading from the N-terminus, the 360-residue chain is Peptide chain release factor 1 (360 aa).

An N5-methylglutamine modification is found at glutamine 235. The interval 285-313 (KRQQAEASTRRNLLGSGDRSDRNRTYNFP) is disordered.

This sequence belongs to the prokaryotic/mitochondrial release factor family. Methylated by PrmC. Methylation increases the termination efficiency of RF1.

The protein resides in the cytoplasm. Its function is as follows. Peptide chain release factor 1 directs the termination of translation in response to the peptide chain termination codons UAG and UAA. This Enterobacter sp. (strain 638) protein is Peptide chain release factor 1.